Consider the following 1287-residue polypeptide: Cell adhesion molecule-related/down-regulated by oncogenes (1287 aa).

The signal sequence occupies residues 1-25 (MHPDLGPLCTLLYVTLTILCSSVSS). The Extracellular segment spans residues 26-963 (DLAPYFTSEP…PATSPARSSD (938 aa)). 5 Ig-like C2-type domains span residues 29-114 (PYFT…ATVS), 120-204 (DFGS…LKVE), 225-303 (PTHS…KYVT), 310-396 (EHAS…GRLE), and 405-516 (PVII…ASLM). C50 and C97 are disulfide-bonded. Residues N88, N100, N180, N287, N294, N342, and N427 are each glycosylated (N-linked (GlcNAc...) asparagine). Intrachain disulfides connect C141–C191 and C243–C290. Disulfide bonds link C333-C380 and C426-C500. Residues 531 to 553 (LPDAAQNDDRSKRDGSETGLLSS) are disordered. The span at 537-546 (NDDRSKRDGS) shows a compositional bias: basic and acidic residues. N570 carries an N-linked (GlcNAc...) asparagine glycan. Fibronectin type-III domains follow at residues 579 to 677 (APII…SKEK), 723 to 821 (APDR…FPNR), and 826 to 926 (PITG…TKVK). An N-linked (GlcNAc...) asparagine glycan is attached at N873. A disordered region spans residues 933-955 (EYPVKDLSTPPNSLGSGGNVGPA). A helical transmembrane segment spans residues 964-984 (MLYLIVGCVLGVMVLILMVFI). Topologically, residues 985–1287 (AMCLWKNRQQ…TEVLQQPRET (303 aa)) are cytoplasmic. The interval 1268 to 1287 (SPPGIPLDSPTEVLQQPRET) is disordered.

As to quaternary structure, part of a complex that contains BOC, CDON, NEO1, cadherins and CTNNB1. Interacts with NTN3. Interacts with PTCH1. Interacts with GAS1. Interacts with DHH, IHH and SHH. Post-translationally, N-glycosylated.

The protein localises to the cell membrane. Its function is as follows. Component of a cell-surface receptor complex that mediates cell-cell interactions between muscle precursor cells. Promotes differentiation of myogenic cells. The protein is Cell adhesion molecule-related/down-regulated by oncogenes (CDON) of Homo sapiens (Human).